The following is a 596-amino-acid chain: Putative terpenoid synthase 5 (596 aa).

Mg(2+)-binding residues include aspartate 349, aspartate 353, asparagine 481, and aspartate 489. The short motif at 349 to 353 (DDTCD) is the DDXXD motif element.

This sequence belongs to the terpene synthase family. Tpsa subfamily. Mg(2+) is required as a cofactor. The cofactor is Mn(2+).

It localises to the cytoplasm. It participates in secondary metabolite biosynthesis; terpenoid biosynthesis. The sequence is that of Putative terpenoid synthase 5 (TPS05) from Arabidopsis thaliana (Mouse-ear cress).